The following is a 426-amino-acid chain: Gamma-glutamyl phosphate reductase (426 aa).

It belongs to the gamma-glutamyl phosphate reductase family.

It is found in the cytoplasm. It carries out the reaction L-glutamate 5-semialdehyde + phosphate + NADP(+) = L-glutamyl 5-phosphate + NADPH + H(+). It functions in the pathway amino-acid biosynthesis; L-proline biosynthesis; L-glutamate 5-semialdehyde from L-glutamate: step 2/2. Catalyzes the NADPH-dependent reduction of L-glutamate 5-phosphate into L-glutamate 5-semialdehyde and phosphate. The product spontaneously undergoes cyclization to form 1-pyrroline-5-carboxylate. In Cupriavidus metallidurans (strain ATCC 43123 / DSM 2839 / NBRC 102507 / CH34) (Ralstonia metallidurans), this protein is Gamma-glutamyl phosphate reductase.